The primary structure comprises 134 residues: RxLR effector protein Avh238 (134 aa).

Residues 1–21 (MRGVFFVAVAVAIFARSSAEA) form the signal peptide. The short motif at 44–68 (RFLRVADSEDDDLAAPADDGKTEER) is the RxLR-dEER element. Positions 50 to 72 (DSEDDDLAAPADDGKTEERAPKF) are disordered. Over residues 61-70 (DDGKTEERAP) the composition is skewed to basic and acidic residues.

It belongs to the RxLR effector family.

It is found in the secreted. It localises to the host cytoplasm. The protein localises to the host nucleus. Effector that, due to the lack of a histidine residue at position 79, is not able to induce cell death in tomato, tobacco, eggplant, potato, or in A.thaliana. The chain is RxLR effector protein Avh238 from Phytophthora sojae (Soybean stem and root rot agent).